Here is a 550-residue protein sequence, read N- to C-terminus: Membrane protein insertase YidC (550 aa).

A helical transmembrane segment spans residues 6-26 (NLLVIALLFVSFMIWQTWEQD). Disordered regions lie at residues 28–54 (APKPQVQQTTQTTTTAAGSAASQGVPA) and 111–132 (QSGLTGRNGPDNPNNNKGRPLY). A compositionally biased stretch (low complexity) spans 30-52 (KPQVQQTTQTTTTAAGSAASQGV). A compositionally biased stretch (polar residues) spans 111 to 127 (QSGLTGRNGPDNPNNNK). Transmembrane regions (helical) follow at residues 346–366 (KWIHSFLGNWGFSIIAITFIV), 421–441 (LGGCFPLLIQMPIFLALYYML), 459–479 (LSAQDPYYILPILMGATMFFI), and 500–520 (PVIFTVFFLWFPSGLVLYYIV).

It belongs to the OXA1/ALB3/YidC family. Type 1 subfamily. In terms of assembly, interacts with the Sec translocase complex via SecD. Specifically interacts with transmembrane segments of nascent integral membrane proteins during membrane integration.

It localises to the cell inner membrane. Functionally, required for the insertion and/or proper folding and/or complex formation of integral membrane proteins into the membrane. Involved in integration of membrane proteins that insert both dependently and independently of the Sec translocase complex, as well as at least some lipoproteins. Aids folding of multispanning membrane proteins. In Cronobacter sakazakii (strain ATCC BAA-894) (Enterobacter sakazakii), this protein is Membrane protein insertase YidC.